The sequence spans 275 residues: Adaptin ear-binding coat-associated protein 1 (275 aa).

The interval 166 to 190 (ITTKKGGTSKPKTAGTGGLSLLPPP) is disordered. The span at 167–179 (TTKKGGTSKPKTA) shows a compositional bias: low complexity. T211 bears the Phosphothreonine mark. Residues 215-275 (IPKSNHGGSD…APQPSNWVQF (61 aa)) form a disordered region. 2 short sequence motifs (WXXF motif) span residues 252–255 (WGDF) and 272–275 (WVQF). Polar residues predominate over residues 256-275 (STASSSVPNQAPQPSNWVQF).

The protein belongs to the NECAP family. Interacts with AP1G1 and AP2A1 components of the adapter protein complexes AP-1 and AP-2. Interacts with the GAE domain proteins GGA1, GGA2 and GGA3.

It is found in the cytoplasmic vesicle. It localises to the clathrin-coated vesicle membrane. The protein resides in the cell membrane. In terms of biological role, involved in endocytosis. In Bos taurus (Bovine), this protein is Adaptin ear-binding coat-associated protein 1 (NECAP1).